The sequence spans 172 residues: 18.6 kDa class III heat shock protein (172 aa).

A disordered region spans residues 29–54 (RRSAGDHAHHAAHGHGQHRISGIGGG). One can recognise a sHSP domain in the interval 48–172 (ISGIGGGAPV…KTKSVQVTIA (125 aa)).

Belongs to the small heat shock protein (HSP20) family. As to quaternary structure, may form oligomeric structures.

It localises to the cytoplasm. The protein is 18.6 kDa class III heat shock protein (HSP18.6) of Oryza sativa subsp. japonica (Rice).